Reading from the N-terminus, the 545-residue chain is CTP synthase (545 aa).

The amidoligase domain stretch occupies residues 1 to 265 (MNGIKHIFIT…DKFVIKHLDL (265 aa)). Ser15 lines the CTP pocket. Ser15 is a binding site for UTP. ATP contacts are provided by residues 16 to 21 (SIGKGL) and Asp73. Asp73 and Glu141 together coordinate Mg(2+). Residues 148 to 150 (DIE), 188 to 193 (KTKPTQ), and Lys224 contribute to the CTP site. UTP contacts are provided by residues 188–193 (KTKPTQ) and Lys224. One can recognise a Glutamine amidotransferase type-1 domain in the interval 290–534 (EIAIIGKYTG…VAAALARKEI (245 aa)). Gly349 contacts L-glutamine. The Nucleophile; for glutamine hydrolysis role is filled by Cys376. Residues 377-380 (LGMQ), Glu400, and Arg460 each bind L-glutamine. Active-site residues include His507 and Glu509.

It belongs to the CTP synthase family. As to quaternary structure, homotetramer.

The enzyme catalyses UTP + L-glutamine + ATP + H2O = CTP + L-glutamate + ADP + phosphate + 2 H(+). It carries out the reaction L-glutamine + H2O = L-glutamate + NH4(+). It catalyses the reaction UTP + NH4(+) + ATP = CTP + ADP + phosphate + 2 H(+). It functions in the pathway pyrimidine metabolism; CTP biosynthesis via de novo pathway; CTP from UDP: step 2/2. Allosterically activated by GTP, when glutamine is the substrate; GTP has no effect on the reaction when ammonia is the substrate. The allosteric effector GTP functions by stabilizing the protein conformation that binds the tetrahedral intermediate(s) formed during glutamine hydrolysis. Inhibited by the product CTP, via allosteric rather than competitive inhibition. Catalyzes the ATP-dependent amination of UTP to CTP with either L-glutamine or ammonia as the source of nitrogen. Regulates intracellular CTP levels through interactions with the four ribonucleotide triphosphates. This Tropheryma whipplei (strain Twist) (Whipple's bacillus) protein is CTP synthase.